The sequence spans 586 residues: Glutamine--tRNA ligase (586 aa).

Positions 58 to 68 (PEPNGYLHIGH) match the 'HIGH' region motif. Residues 59-61 (EPN) and 65-71 (HIGHAKS) each bind ATP. L-glutamine-binding residues include aspartate 91 and tyrosine 240. Residues threonine 259 and 294–295 (RL) contribute to the ATP site. A 'KMSKS' region motif is present at residues 301–305 (VTSKR).

This sequence belongs to the class-I aminoacyl-tRNA synthetase family. In terms of assembly, monomer.

It is found in the cytoplasm. The catalysed reaction is tRNA(Gln) + L-glutamine + ATP = L-glutaminyl-tRNA(Gln) + AMP + diphosphate. The chain is Glutamine--tRNA ligase from Bordetella avium (strain 197N).